A 147-amino-acid chain; its full sequence is Lysozyme C-1 (147 aa).

Positions 1-18 (MKALIILGLLCLSVAVQG) are cleaved as a signal peptide. Residues 19–147 (KVFERCELAR…VSSYVEGCSL (129 aa)) form the C-type lysozyme domain. 4 cysteine pairs are disulfide-bonded: Cys24/Cys145, Cys48/Cys133, Cys83/Cys99, and Cys95/Cys113. Active-site residues include Glu53 and Asp71.

Belongs to the glycosyl hydrolase 22 family. In terms of assembly, monomer. In terms of tissue distribution, expressed in stomach.

Its subcellular location is the secreted. It catalyses the reaction Hydrolysis of (1-&gt;4)-beta-linkages between N-acetylmuramic acid and N-acetyl-D-glucosamine residues in a peptidoglycan and between N-acetyl-D-glucosamine residues in chitodextrins.. Its function is as follows. Lysozymes have primarily a bacteriolytic function; those in tissues and body fluids are associated with the monocyte-macrophage system and enhance the activity of immunoagents. This chain is Lysozyme C-1, found in Ovis aries (Sheep).